The primary structure comprises 477 residues: Aspartyl/glutamyl-tRNA(Asn/Gln) amidotransferase subunit B (477 aa).

Belongs to the GatB/GatE family. GatB subfamily. As to quaternary structure, heterotrimer of A, B and C subunits.

The enzyme catalyses L-glutamyl-tRNA(Gln) + L-glutamine + ATP + H2O = L-glutaminyl-tRNA(Gln) + L-glutamate + ADP + phosphate + H(+). The catalysed reaction is L-aspartyl-tRNA(Asn) + L-glutamine + ATP + H2O = L-asparaginyl-tRNA(Asn) + L-glutamate + ADP + phosphate + 2 H(+). Allows the formation of correctly charged Asn-tRNA(Asn) or Gln-tRNA(Gln) through the transamidation of misacylated Asp-tRNA(Asn) or Glu-tRNA(Gln) in organisms which lack either or both of asparaginyl-tRNA or glutaminyl-tRNA synthetases. The reaction takes place in the presence of glutamine and ATP through an activated phospho-Asp-tRNA(Asn) or phospho-Glu-tRNA(Gln). The sequence is that of Aspartyl/glutamyl-tRNA(Asn/Gln) amidotransferase subunit B from Ureaplasma parvum serovar 3 (strain ATCC 27815 / 27 / NCTC 11736).